The following is a 101-amino-acid chain: Large ribosomal subunit protein bL21 (101 aa).

Belongs to the bacterial ribosomal protein bL21 family. As to quaternary structure, part of the 50S ribosomal subunit. Contacts protein L20.

Functionally, this protein binds to 23S rRNA in the presence of protein L20. The polypeptide is Large ribosomal subunit protein bL21 (Micrococcus luteus (strain ATCC 4698 / DSM 20030 / JCM 1464 / CCM 169 / CCUG 5858 / IAM 1056 / NBRC 3333 / NCIMB 9278 / NCTC 2665 / VKM Ac-2230) (Micrococcus lysodeikticus)).